We begin with the raw amino-acid sequence, 196 residues long: Macrophage infectivity potentiator (196 aa).

Residues 1–29 (MHRENYFSKIAFCLLGVLFLSCITSVQTV) form the signal peptide. The 87-residue stretch at 85 to 171 (DDKCEVHYTG…EFDVELISIK (87 aa)) folds into the PPIase FKBP-type domain.

This sequence belongs to the FKBP-type PPIase family.

Its subcellular location is the secreted. The protein localises to the extracellular space. The enzyme catalyses [protein]-peptidylproline (omega=180) = [protein]-peptidylproline (omega=0). Its activity is regulated as follows. Strongly inhibited by FK506 and L-685,818. In terms of biological role, essential virulence factor associated with macrophage infectivity. Exhibits PPIase activity. This chain is Macrophage infectivity potentiator (MIP), found in Trypanosoma cruzi.